Here is a 60-residue protein sequence, read N- to C-terminus: Sperm protamine P1 (60 aa).

The tract at residues 1-60 (MARYRHSRSRSRSRYRRRRRRRSRYRSRRRRXRRRRRSRRGRRRRGYSRRRYSRRRRRRY) is disordered.

The protein belongs to the protamine P1 family. In terms of tissue distribution, testis.

It localises to the nucleus. The protein localises to the chromosome. Functionally, protamines substitute for histones in the chromatin of sperm during the haploid phase of spermatogenesis. They compact sperm DNA into a highly condensed, stable and inactive complex. This is Sperm protamine P1 (PRM1) from Petrogale concinna (Nabarlek).